Reading from the N-terminus, the 277-residue chain is Protein CUSTOS (277 aa).

Disordered regions lie at residues 1 to 81 (MVAP…QTTP), 108 to 182 (TQQA…QRCR), and 238 to 277 (SVNG…EPKN). Residues 9–18 (SDSESSSSDS) show a composition bias toward low complexity. Position 62 is a phosphoserine (Ser-62). Residues 63 to 72 (RRREVNQHDE) are compositionally biased toward basic and acidic residues. Thr-80 carries the phosphothreonine modification. Residues 106 to 141 (KKTQQARLQQEAKEQQEAKEQQAAKEEQAAKKEEDG) are a coiled coil. Positions 115–142 (QEAKEQQEAKEQQAAKEEQAAKKEEDGF) are enriched in basic and acidic residues. Residues Ser-158 and Ser-238 each carry the phosphoserine modification. Over residues 248–258 (TKKKKKKKAKK) the composition is skewed to basic residues. A Nucleolar localization signal (NLS) motif is present at residues 249–256 (KKKKKKKA). A compositionally biased stretch (low complexity) spans 265 to 277 (CPPAECAAAEPKN).

This sequence belongs to the CUSTOS family.

The protein resides in the nucleus envelope. Its function is as follows. Plays a role in the regulation of Wnt signaling pathway during early development. The sequence is that of Protein CUSTOS from Rattus norvegicus (Rat).